Reading from the N-terminus, the 67-residue chain is Cold shock-like protein CspE (67 aa).

Residues 5–64 (GKVKWFNSEKGFGFIEVEGGNDVFVHFSAITGDGFKSLDEGQEVSFEVEDGNRGPQAKNV) enclose the CSD domain.

Homodimer.

The protein resides in the cytoplasm. Functionally, can bind to ATTGG and CCAAT motifs (Y-box motifs) of single-stranded oligonucleotides. The chain is Cold shock-like protein CspE (cspE) from Bacillus anthracis.